Consider the following 271-residue polypeptide: Secretagogin (271 aa).

6 EF-hand domains span residues 8–43, 53–88, 100–135, 144–179, 192–227, and 235–271; these read LDAA…LLKK, KVQG…EDEN, DNSV…LFLQ, KLDE…QENF, ERKS…MMEL, and VDLD…KANP. Positions 21, 23, 25, 27, and 32 each coordinate Ca(2+). Positions 113, 115, 117, 124, 159, 161, 163, 168, 205, 207, 209, 216, 249, 251, 253, 255, and 260 each coordinate Ca(2+).

It is found in the cytoplasm. The chain is Secretagogin (scgn) from Xenopus laevis (African clawed frog).